The following is a 194-amino-acid chain: Small ribosomal subunit protein uS7 (194 aa).

It belongs to the universal ribosomal protein uS7 family. As to quaternary structure, part of the 30S ribosomal subunit.

One of the primary rRNA binding proteins, it binds directly to 16S rRNA where it nucleates assembly of the head domain of the 30S subunit. Is located at the subunit interface close to the decoding center. The sequence is that of Small ribosomal subunit protein uS7 from Methanospirillum hungatei JF-1 (strain ATCC 27890 / DSM 864 / NBRC 100397 / JF-1).